The sequence spans 1088 residues: Calcium-transporting ATPase 5, plasma membrane-type (1088 aa).

The segment covering 1 to 11 (MESASSSLATS) has biased composition (low complexity). The segment at 1 to 32 (MESASSSLATSGRRRSSSGGGGGSWGSIGSAA) is disordered. Over 1–198 (MESASSSLAT…FLWDACKDLT (198 aa)) the chain is Cytoplasmic. The helical transmembrane segment at 199–219 (LIILMVAAAVSLALGITTEGI) threads the bilayer. Residues 220–221 (KE) are Extracellular-facing. Residues 222 to 242 (GWYDGASIAFAVLLVVVVTAT) traverse the membrane as a helical segment. Residues 243 to 338 (SDYKQSLQFQ…MSGCKVADGY (96 aa)) lie on the Cytoplasmic side of the membrane. The chain crosses the membrane as a helical span at residues 339-359 (GTMLVTAVGINTEWGLLMASI). Over 360 to 375 (SEDSGEETPLQVRLNG) the chain is Extracellular. Residues 376 to 396 (VATFIGMVGLSVALAVLVVLL) form a helical membrane-spanning segment. The Cytoplasmic segment spans residues 397 to 425 (ARYFTGHTYNPDGSVQYVKGKMGVGQTIR). Residues 426-446 (GIVGIFTVAVTIVVVAVPEGL) traverse the membrane as a helical segment. Residues 447 to 851 (PLAVTLTLAF…GRSVYANIQK (405 aa)) lie on the Extracellular side of the membrane. D486 functions as the 4-aspartylphosphate intermediate in the catalytic mechanism. N-linked (GlcNAc...) asparagine glycosylation is found at N532, N569, and N737. Residues D794 and D798 each coordinate Mg(2+). The chain crosses the membrane as a helical span at residues 852–872 (FIQFQLTVNVAALIINVVAAV). At 873-880 (SSGNVPLN) the chain is on the cytoplasmic side. The chain crosses the membrane as a helical span at residues 881-901 (AVQLLWVNLIMDTLGALALAT). The Extracellular segment spans residues 902 to 919 (EPPTDHLMQRPPVGRREP). The helical transmembrane segment at 920-940 (LITNVMWRNLIIMALFQVIVL) threads the bilayer. Residues 941–1000 (LTLNFRGTSLLQLKNDNQAHADKVKNTFIFNTFVLCQVFNEFNARKPDELNIFKGITGNH) are Cytoplasmic-facing. A helical transmembrane segment spans residues 1001-1021 (LFMAIVAITVVLQALIVEFLG). At 1022–1030 (KFTSTTRLT) the chain is on the extracellular side. A helical membrane pass occupies residues 1031-1051 (WQLWLVSIGLAFFSWPLAFVG). The Cytoplasmic segment spans residues 1052–1088 (KLIPVPERPLGDFFACCCPGSKQAADAKGDDADHSDV).

This sequence belongs to the cation transport ATPase (P-type) (TC 3.A.3) family. Type IIB subfamily. In terms of assembly, interacts with NOH1.

It is found in the cell membrane. It carries out the reaction Ca(2+)(in) + ATP + H2O = Ca(2+)(out) + ADP + phosphate + H(+). Its activity is regulated as follows. Activated by calmodulin. In terms of biological role, this magnesium-dependent enzyme catalyzes the hydrolysis of ATP coupled with the translocation of calcium from the cytosol out of the cell, into the endoplasmic reticulum, or into organelles. Involved in salt and drought stress tolerance. Involved in cold stress tolerance. The polypeptide is Calcium-transporting ATPase 5, plasma membrane-type (Oryza sativa subsp. japonica (Rice)).